Consider the following 158-residue polypeptide: 3-hydroxyacyl-[acyl-carrier-protein] dehydratase FabZ (158 aa).

Residue His-57 is part of the active site.

This sequence belongs to the thioester dehydratase family. FabZ subfamily.

It localises to the cytoplasm. It carries out the reaction a (3R)-hydroxyacyl-[ACP] = a (2E)-enoyl-[ACP] + H2O. Its function is as follows. Involved in unsaturated fatty acids biosynthesis. Catalyzes the dehydration of short chain beta-hydroxyacyl-ACPs and long chain saturated and unsaturated beta-hydroxyacyl-ACPs. In Helicobacter acinonychis (strain Sheeba), this protein is 3-hydroxyacyl-[acyl-carrier-protein] dehydratase FabZ.